A 240-amino-acid chain; its full sequence is Probable septum site-determining protein MinC (240 aa).

This sequence belongs to the MinC family. As to quaternary structure, interacts with MinD and FtsZ.

Functionally, cell division inhibitor that blocks the formation of polar Z ring septums. Rapidly oscillates between the poles of the cell to destabilize FtsZ filaments that have formed before they mature into polar Z rings. Prevents FtsZ polymerization. The sequence is that of Probable septum site-determining protein MinC from Aeromonas hydrophila subsp. hydrophila (strain ATCC 7966 / DSM 30187 / BCRC 13018 / CCUG 14551 / JCM 1027 / KCTC 2358 / NCIMB 9240 / NCTC 8049).